The primary structure comprises 592 residues: Methionine--tRNA ligase (592 aa).

A 'HIGH' region motif is present at residues 12–22 (PYANGPFHVGH). 4 residues coordinate Zn(2+): Cys-144, Cys-147, Cys-157, and Cys-160. Positions 342 to 346 (KMSTS) match the 'KMSKS' region motif. Thr-345 contacts ATP.

The protein belongs to the class-I aminoacyl-tRNA synthetase family. MetG type 1 subfamily. In terms of assembly, monomer. Requires Zn(2+) as cofactor.

The protein resides in the cytoplasm. It carries out the reaction tRNA(Met) + L-methionine + ATP = L-methionyl-tRNA(Met) + AMP + diphosphate. Is required not only for elongation of protein synthesis but also for the initiation of all mRNA translation through initiator tRNA(fMet) aminoacylation. This chain is Methionine--tRNA ligase, found in Roseiflexus sp. (strain RS-1).